A 148-amino-acid chain; its full sequence is MGRFIFVSFGLLVVFLSLSGSEAGFCCPSHWSSYDRYCYKVFKQEMTWADAEKFCTQQHTGSHLVSFHSTEEVDFVVKMTHQSLKSTFFWIGANNIWNKCNWQWSDGTKPEYKEWHEEFECLISRTFDNQWLSAPCSDTYSFVCKFEA.

An N-terminal signal peptide occupies residues 1–23 (MGRFIFVSFGLLVVFLSLSGSEA). Disulfide bonds link Cys-27–Cys-38, Cys-55–Cys-144, and Cys-121–Cys-136. The C-type lectin domain occupies 34-148 (YDRYCYKVFK…TYSFVCKFEA (115 aa)).

The protein belongs to the snaclec family. In terms of assembly, tetramer of heterodimers of alpha and beta subunits (alphabeta)(4); disulfide-linked. As to expression, expressed by the venom gland.

It is found in the secreted. Snake venom lectin that activates platelets by binding to the platelet collagen receptor glycoprotein VI (GP6). The indirect activation of integrin alpha-IIb/beta-3 (ITGA2B/ITGB3) also induced by the toxin is upstream the cytoskeletal translocation of GPIb, FcRgamma (FCER1G) and 14-3-3zeta (YWHAZ). The polypeptide is Snaclec convulxin subunit beta (Crotalus durissus terrificus (South American rattlesnake)).